We begin with the raw amino-acid sequence, 130 residues long: Small ribosomal subunit protein uS8 (130 aa).

The protein belongs to the universal ribosomal protein uS8 family. As to quaternary structure, part of the 30S ribosomal subunit. Contacts proteins S5 and S12.

Its function is as follows. One of the primary rRNA binding proteins, it binds directly to 16S rRNA central domain where it helps coordinate assembly of the platform of the 30S subunit. This Vibrio parahaemolyticus serotype O3:K6 (strain RIMD 2210633) protein is Small ribosomal subunit protein uS8.